We begin with the raw amino-acid sequence, 96 residues long: Co-chaperonin GroES (96 aa).

This sequence belongs to the GroES chaperonin family. Heptamer of 7 subunits arranged in a ring. Interacts with the chaperonin GroEL.

It localises to the cytoplasm. In terms of biological role, together with the chaperonin GroEL, plays an essential role in assisting protein folding. The GroEL-GroES system forms a nano-cage that allows encapsulation of the non-native substrate proteins and provides a physical environment optimized to promote and accelerate protein folding. GroES binds to the apical surface of the GroEL ring, thereby capping the opening of the GroEL channel. This Neisseria meningitidis serogroup A / serotype 4A (strain DSM 15465 / Z2491) protein is Co-chaperonin GroES.